The following is a 668-amino-acid chain: DNA damage-responsive serine/threonine-protein kinase RqkA (668 aa).

Residues 13-272 (YELLALLGEG…SGAALAHLWA (260 aa)) enclose the Protein kinase domain. ATP-binding positions include 19–27 (LGEGGSAQV) and lysine 42. The active-site Proton acceptor is aspartate 137.

Belongs to the protein kinase superfamily. Ser/Thr protein kinase family. Requires pyrroloquinoline quinone as cofactor. In terms of processing, autophosphorylated.

It carries out the reaction L-seryl-[protein] + ATP = O-phospho-L-seryl-[protein] + ADP + H(+). The catalysed reaction is L-threonyl-[protein] + ATP = O-phospho-L-threonyl-[protein] + ADP + H(+). Autokinase activity is stimulated by DNA damage. Stimulated by PQQ and DNA ends in vitro. In terms of biological role, plays an important role in radiation resistance and DNA double-strand break (DSB) repair. Involved in transcriptional regulation of genes important for bacterial stress response. Phosphorylates PprA in vitro. This chain is DNA damage-responsive serine/threonine-protein kinase RqkA (rqkA), found in Deinococcus radiodurans (strain ATCC 13939 / DSM 20539 / JCM 16871 / CCUG 27074 / LMG 4051 / NBRC 15346 / NCIMB 9279 / VKM B-1422 / R1).